A 54-amino-acid chain; its full sequence is Light-harvesting protein B-880 beta chain (54 aa).

Topologically, residues 1–20 (AEDRSSLSGVSDAEAKEFHA) are cytoplasmic. A bacteriochlorophyll contacts are provided by H19 and H37. The helical transmembrane segment at 21 to 43 (LFVSSFMGFMVVAVLAHVLAWAW) threads the bilayer. The Periplasmic portion of the chain corresponds to 44-54 (RPWIPGPKGWA).

The protein belongs to the antenna complex beta subunit family. In terms of assembly, the core complex is formed by different alpha and beta chains, binding bacteriochlorophyll molecules, and arranged most probably in tetrameric structures disposed around the reaction center. The non-pigmented gamma chains may constitute additional components.

The protein resides in the cell inner membrane. Functionally, antenna complexes are light-harvesting systems, which transfer the excitation energy to the reaction centers. This Rhodoblastus acidophilus (Rhodopseudomonas acidophila) protein is Light-harvesting protein B-880 beta chain.